Consider the following 90-residue polypeptide: C-C motif chemokine 4 homolog (90 aa).

A signal peptide spans 1 to 21; that stretch reads MKVSVAALAVLLIAICYQTSA. Intrachain disulfides connect Cys-32-Cys-56 and Cys-33-Cys-72.

It belongs to the intercrine beta (chemokine CC) family. In terms of assembly, homodimer.

It is found in the secreted. Monokine with inflammatory and chemokinetic properties. In Gallus gallus (Chicken), this protein is C-C motif chemokine 4 homolog (CCL4).